The chain runs to 423 residues: UDP-N-acetylglucosamine 1-carboxyvinyltransferase (423 aa).

A phosphoenolpyruvate-binding site is contributed by 22–23 (KN). Arg93 provides a ligand contact to UDP-N-acetyl-alpha-D-glucosamine. Cys117 serves as the catalytic Proton donor. The residue at position 117 (Cys117) is a 2-(S-cysteinyl)pyruvic acid O-phosphothioketal. Asp305 and Ile327 together coordinate UDP-N-acetyl-alpha-D-glucosamine.

The protein belongs to the EPSP synthase family. MurA subfamily.

Its subcellular location is the cytoplasm. It catalyses the reaction phosphoenolpyruvate + UDP-N-acetyl-alpha-D-glucosamine = UDP-N-acetyl-3-O-(1-carboxyvinyl)-alpha-D-glucosamine + phosphate. Its pathway is cell wall biogenesis; peptidoglycan biosynthesis. Cell wall formation. Adds enolpyruvyl to UDP-N-acetylglucosamine. This Acidithiobacillus ferrooxidans (strain ATCC 23270 / DSM 14882 / CIP 104768 / NCIMB 8455) (Ferrobacillus ferrooxidans (strain ATCC 23270)) protein is UDP-N-acetylglucosamine 1-carboxyvinyltransferase.